Consider the following 469-residue polypeptide: Sulfate adenylyltransferase subunit 1 (469 aa).

The region spanning 22-237 is the tr-type G domain; the sequence is KEVLRFITCG…LEEVPVKSEE (216 aa). The tract at residues 31–38 is G1; it reads GSVDDGKS. Position 31-38 (31-38) interacts with GTP; the sequence is GSVDDGKS. The interval 89–93 is G2; it reads GITID. Residues 110–113 are G3; that stretch reads DTPG. GTP-binding positions include 110–114 and 165–168; these read DTPGH and NKMD. The segment at 165–168 is G4; sequence NKMD. Residues 202 to 204 form a G5 region; it reads SAK.

It belongs to the TRAFAC class translation factor GTPase superfamily. Classic translation factor GTPase family. CysN/NodQ subfamily. In terms of assembly, heterodimer composed of CysD, the smaller subunit, and CysN.

It carries out the reaction sulfate + ATP + H(+) = adenosine 5'-phosphosulfate + diphosphate. It functions in the pathway sulfur metabolism; hydrogen sulfide biosynthesis; sulfite from sulfate: step 1/3. In terms of biological role, with CysD forms the ATP sulfurylase (ATPS) that catalyzes the adenylation of sulfate producing adenosine 5'-phosphosulfate (APS) and diphosphate, the first enzymatic step in sulfur assimilation pathway. APS synthesis involves the formation of a high-energy phosphoric-sulfuric acid anhydride bond driven by GTP hydrolysis by CysN coupled to ATP hydrolysis by CysD. This Methylorubrum extorquens (strain PA1) (Methylobacterium extorquens) protein is Sulfate adenylyltransferase subunit 1.